A 138-amino-acid chain; its full sequence is Putative transcriptional regulatory protein NedR (138 aa).

A disordered region spans residues 1-25; that stretch reads MCWGRSWTFGRSSSKGWRPTSSASS. Residues 9–25 show a composition bias toward polar residues; sequence FGRSSSKGWRPTSSASS.

In terms of biological role, may serve as a transcriptional regulator. This Micromonospora viridifaciens protein is Putative transcriptional regulatory protein NedR (nedR).